The following is a 367-amino-acid chain: uncharacterized protein (367 aa).

The FAD-binding PCMH-type domain occupies 1–96 (ITLHRLAELV…LTATLQLQPV (96 aa)).

It to M.tuberculosis Rv3790.

This is an uncharacterized protein from Streptomyces coelicolor.